The sequence spans 177 residues: Shikimate kinase (177 aa).

17 to 22 lines the ATP pocket; it reads GAGKST. Serine 21 serves as a coordination point for Mg(2+). Aspartate 39, arginine 63, and glycine 85 together coordinate substrate. Arginine 123 lines the ATP pocket. Arginine 142 provides a ligand contact to substrate. Arginine 160 is an ATP binding site.

Belongs to the shikimate kinase family. As to quaternary structure, monomer. Mg(2+) is required as a cofactor.

Its subcellular location is the cytoplasm. It catalyses the reaction shikimate + ATP = 3-phosphoshikimate + ADP + H(+). It functions in the pathway metabolic intermediate biosynthesis; chorismate biosynthesis; chorismate from D-erythrose 4-phosphate and phosphoenolpyruvate: step 5/7. Catalyzes the specific phosphorylation of the 3-hydroxyl group of shikimic acid using ATP as a cosubstrate. The chain is Shikimate kinase from Halorhodospira halophila (strain DSM 244 / SL1) (Ectothiorhodospira halophila (strain DSM 244 / SL1)).